The sequence spans 186 residues: MDSLKDHFLIAMPSLDDTFFERSVIYICEHDQKGAMGLMVNRPIGVEVEDLLEQMELYLSPEFVFSLDSQVLIGGPVAPERGFVLHTPQQHWVNSTEISEDTMLTSSRDILASIGSDKSPENFVVALGYSGWSKDQLEQEIADNTWLTIKATPELLFNVEPEQMWLMATQQLGFDIWQMSSQVGHA.

The protein belongs to the UPF0301 (AlgH) family.

The sequence is that of UPF0301 protein Sfri_2850 from Shewanella frigidimarina (strain NCIMB 400).